Consider the following 520-residue polypeptide: Cobyric acid synthase (520 aa).

Residues 254–465 enclose the GATase cobBQ-type domain; sequence ELDIAVVRLP…IHGILDNDGL (212 aa). Cys335 (nucleophile) is an active-site residue. The active site involves His457.

It belongs to the CobB/CobQ family. CobQ subfamily.

It functions in the pathway cofactor biosynthesis; adenosylcobalamin biosynthesis. Its function is as follows. Catalyzes amidations at positions B, D, E, and G on adenosylcobyrinic A,C-diamide. NH(2) groups are provided by glutamine, and one molecule of ATP is hydrogenolyzed for each amidation. The sequence is that of Cobyric acid synthase from Sorangium cellulosum (strain So ce56) (Polyangium cellulosum (strain So ce56)).